Reading from the N-terminus, the 180-residue chain is ATP-dependent protease subunit HslV (180 aa).

Threonine 2 is a catalytic residue. Na(+) is bound by residues glycine 157, cysteine 160, and threonine 163.

The protein belongs to the peptidase T1B family. HslV subfamily. In terms of assembly, a double ring-shaped homohexamer of HslV is capped on each side by a ring-shaped HslU homohexamer. The assembly of the HslU/HslV complex is dependent on binding of ATP.

Its subcellular location is the cytoplasm. The catalysed reaction is ATP-dependent cleavage of peptide bonds with broad specificity.. Allosterically activated by HslU binding. Its function is as follows. Protease subunit of a proteasome-like degradation complex believed to be a general protein degrading machinery. The sequence is that of ATP-dependent protease subunit HslV from Tolumonas auensis (strain DSM 9187 / NBRC 110442 / TA 4).